A 79-amino-acid chain; its full sequence is Small ribosomal subunit protein bS16 (79 aa).

The protein belongs to the bacterial ribosomal protein bS16 family.

The chain is Small ribosomal subunit protein bS16 from Hahella chejuensis (strain KCTC 2396).